The chain runs to 109 residues: uncharacterized protein (109 aa).

This is an uncharacterized protein from Caenorhabditis elegans.